Reading from the N-terminus, the 454-residue chain is CCA-adding enzyme (454 aa).

Ser-59 and Arg-62 together coordinate ATP. CTP is bound by residues Ser-59 and Arg-62. Mg(2+) is bound by residues Asp-71, Asp-73, and Asp-125. Residues His-148, Lys-167, and Tyr-176 each coordinate ATP. CTP-binding residues include His-148, Lys-167, and Tyr-176.

It belongs to the tRNA nucleotidyltransferase/poly(A) polymerase family. Archaeal CCA-adding enzyme subfamily. In terms of assembly, homodimer. Mg(2+) serves as cofactor.

It carries out the reaction a tRNA precursor + 2 CTP + ATP = a tRNA with a 3' CCA end + 3 diphosphate. It catalyses the reaction a tRNA with a 3' CCA end + 2 CTP + ATP = a tRNA with a 3' CCACCA end + 3 diphosphate. Functionally, catalyzes the addition and repair of the essential 3'-terminal CCA sequence in tRNAs without using a nucleic acid template. Adds these three nucleotides in the order of C, C, and A to the tRNA nucleotide-73, using CTP and ATP as substrates and producing inorganic pyrophosphate. tRNA 3'-terminal CCA addition is required both for tRNA processing and repair. Also involved in tRNA surveillance by mediating tandem CCA addition to generate a CCACCA at the 3' terminus of unstable tRNAs. While stable tRNAs receive only 3'-terminal CCA, unstable tRNAs are marked with CCACCA and rapidly degraded. The sequence is that of CCA-adding enzyme from Methanosarcina mazei (strain ATCC BAA-159 / DSM 3647 / Goe1 / Go1 / JCM 11833 / OCM 88) (Methanosarcina frisia).